The chain runs to 213 residues: Holliday junction branch migration complex subunit RuvA (213 aa).

The domain I stretch occupies residues 1–64 (MIASVTGEVA…DEAPLLFGFA (64 aa)). Residues 65-143 (QGDEKEIFTV…LPEPPVQQAN (79 aa)) are domain II. Residues 144 to 152 (QPQVPVWRD) form a flexible linker region. The segment at 152–213 (DQVVDALTGL…GTTHAPTGRR (62 aa)) is domain III.

This sequence belongs to the RuvA family. Homotetramer. Forms an RuvA(8)-RuvB(12)-Holliday junction (HJ) complex. HJ DNA is sandwiched between 2 RuvA tetramers; dsDNA enters through RuvA and exits via RuvB. An RuvB hexamer assembles on each DNA strand where it exits the tetramer. Each RuvB hexamer is contacted by two RuvA subunits (via domain III) on 2 adjacent RuvB subunits; this complex drives branch migration. In the full resolvosome a probable DNA-RuvA(4)-RuvB(12)-RuvC(2) complex forms which resolves the HJ.

The protein resides in the cytoplasm. In terms of biological role, the RuvA-RuvB-RuvC complex processes Holliday junction (HJ) DNA during genetic recombination and DNA repair, while the RuvA-RuvB complex plays an important role in the rescue of blocked DNA replication forks via replication fork reversal (RFR). RuvA specifically binds to HJ cruciform DNA, conferring on it an open structure. The RuvB hexamer acts as an ATP-dependent pump, pulling dsDNA into and through the RuvAB complex. HJ branch migration allows RuvC to scan DNA until it finds its consensus sequence, where it cleaves and resolves the cruciform DNA. The chain is Holliday junction branch migration complex subunit RuvA from Kocuria rhizophila (strain ATCC 9341 / DSM 348 / NBRC 103217 / DC2201).